The sequence spans 517 residues: Protein BTN1 (517 aa).

Transmembrane regions (helical) follow at residues 24 to 44, 57 to 77, 88 to 108, 112 to 132, 146 to 166, 169 to 189, 371 to 391, and 409 to 429; these read LFAA…IILS, GVVA…WPLL, VGFC…SSSL, LLGI…FLQL, LGAW…IWWL, GLGV…FPIT, PAII…TFFF, and SITI…SGYV.

It belongs to the battenin family.

The protein localises to the vacuole membrane. Its function is as follows. Involved in vacuolar transport and vacuole pH homeostasis. Also required for cytokinesis. This chain is Protein BTN1 (BTN1), found in Cryptococcus neoformans var. neoformans serotype D (strain B-3501A) (Filobasidiella neoformans).